The primary structure comprises 121 residues: Nitrogen fixation nifHD region glnB-like protein 2 (121 aa).

The protein belongs to the P(II) protein family.

Its function is as follows. Could be involved in the regulation of nitrogen fixation. This is Nitrogen fixation nifHD region glnB-like protein 2 (glnBII) from Methanococcus maripaludis (Methanococcus deltae).